The primary structure comprises 427 residues: Imidazolonepropionase (427 aa).

Residues histidine 96 and histidine 98 each coordinate Fe(3+). Zn(2+)-binding residues include histidine 96 and histidine 98. 4-imidazolone-5-propanoate-binding residues include arginine 105, tyrosine 168, and histidine 201. Residue tyrosine 168 coordinates N-formimidoyl-L-glutamate. Histidine 265 contacts Fe(3+). Histidine 265 serves as a coordination point for Zn(2+). Glutamine 268 contacts 4-imidazolone-5-propanoate. Aspartate 340 lines the Fe(3+) pocket. Aspartate 340 lines the Zn(2+) pocket. The N-formimidoyl-L-glutamate site is built by asparagine 342 and glycine 344. Threonine 345 is a binding site for 4-imidazolone-5-propanoate.

The protein belongs to the metallo-dependent hydrolases superfamily. HutI family. It depends on Zn(2+) as a cofactor. Fe(3+) serves as cofactor.

The protein resides in the cytoplasm. The enzyme catalyses 4-imidazolone-5-propanoate + H2O = N-formimidoyl-L-glutamate. It participates in amino-acid degradation; L-histidine degradation into L-glutamate; N-formimidoyl-L-glutamate from L-histidine: step 3/3. Catalyzes the hydrolytic cleavage of the carbon-nitrogen bond in imidazolone-5-propanoate to yield N-formimidoyl-L-glutamate. It is the third step in the universal histidine degradation pathway. In Psychrobacter cryohalolentis (strain ATCC BAA-1226 / DSM 17306 / VKM B-2378 / K5), this protein is Imidazolonepropionase.